The primary structure comprises 447 residues: MGEDTDTRKINHSFLRDHSYVTEADVISTVEFNHTGELLATGDKGGRVVIFQREPESKNAPHSQGEYDVYSTFQSHEPEFDYLKSLEIEEKINKIKWLPQQNAAHSLLSTNDKTIKLWKITERDKRPEGYNLKDEEGKLKDLSTVTSLQVPVLKPMDLMVEVSPRRIFANGHTYHINSISVNSDCETYMSADDLRINLWHLAITDRSFNIVDIKPANMEDLTEVITASEFHPHHCNLFVYSSSKGSLRLCDMRAAALCDKHSKLFEEPEDPSNRSFFSEIISSVSDVKFSHSGRYMLTRDYLTVKVWDLNMEARPIETYQVHDYLRSKLCSLYESDCIFDKFECAWNGSDSVIMTGAYNNFFRMFDRNTKRDVTLEASRESSKPRAVLKPRRVCVGGKRRRDDISVDSLDFTKKILHTAWHPAENIIAIAATNNLYIFQDKVNSDMH.

7 WD repeats span residues threonine 22 to proline 61, glutamate 87 to glutamate 128, glycine 171 to asparagine 209, aspartate 220 to lysine 260, glutamate 279 to glutamate 317, glutamate 334 to leucine 375, and aspartate 410 to methionine 446.

This sequence belongs to the phosphatase 2A regulatory subunit B family. As to quaternary structure, PP2A consists of a common heterodimeric core enzyme, composed of a 36 kDa catalytic subunit (subunit C) and a 65 kDa constant regulatory subunit (PR65 or subunit A), that associates with a variety of regulatory subunits. Proteins that associate with the core dimer include three families of regulatory subunits B (the R2/B/PR55/B55, R3/B''/PR72/PR130/PR59 and R5/B'/B56 families), the 48 kDa variable regulatory subunit, viral proteins, and cell signaling molecules. Interacts with IER5. Highly expressed in brain.

In terms of biological role, the B regulatory subunit might modulate substrate selectivity and catalytic activity, and might also direct the localization of the catalytic enzyme to a particular subcellular compartment. The polypeptide is Serine/threonine-protein phosphatase 2A 55 kDa regulatory subunit B gamma isoform (Ppp2r2c) (Rattus norvegicus (Rat)).